The following is a 411-amino-acid chain: UPF0761 membrane protein PLES_43641 (411 aa).

The next 6 helical transmembrane spans lie at Leu36–Phe56, His92–Ile112, Phe132–Val152, Leu174–Val194, Gly207–Phe229, and Ile244–Cys264.

Belongs to the UPF0761 family.

Its subcellular location is the cell inner membrane. The protein is UPF0761 membrane protein PLES_43641 of Pseudomonas aeruginosa (strain LESB58).